We begin with the raw amino-acid sequence, 136 residues long: Histone H3 (136 aa).

The disordered stretch occupies residues 1–42 (MARTKQTARKSTGGKAPRKQLATKAAAKSAPATGGVKKPHRY). K5 is modified (N6-methylated lysine). K10 is subject to N6-acetyllysine; alternate. K10 is modified (N6-methylated lysine; alternate). The residue at position 11 (S11) is a Phosphoserine. 2 positions are modified to N6-acetyllysine: K15 and K24. The segment covering 22-33 (ATKAAAKSAPAT) has biased composition (low complexity). K28, K37, and K80 each carry N6-methylated lysine.

The protein belongs to the histone H3 family. As to quaternary structure, the nucleosome is a histone octamer containing two molecules each of H2A, H2B, H3 and H4 assembled in one H3-H4 heterotetramer and two H2A-H2B heterodimers. The octamer wraps approximately 147 bp of DNA. Post-translationally, acetylation is generally linked to gene activation. In terms of processing, methylation at Lys-5 is linked to gene activation. Methylation at Lys-10 is linked to gene repression.

It localises to the nucleus. Its subcellular location is the chromosome. Its function is as follows. Core component of nucleosome. Nucleosomes wrap and compact DNA into chromatin, limiting DNA accessibility to the cellular machineries which require DNA as a template. Histones thereby play a central role in transcription regulation, DNA repair, DNA replication and chromosomal stability. DNA accessibility is regulated via a complex set of post-translational modifications of histones, also called histone code, and nucleosome remodeling. The chain is Histone H3 from Acropora formosa (Staghorn coral).